The sequence spans 415 residues: Gamma-glutamyl phosphate reductase (415 aa).

The protein belongs to the gamma-glutamyl phosphate reductase family.

The protein localises to the cytoplasm. The enzyme catalyses L-glutamate 5-semialdehyde + phosphate + NADP(+) = L-glutamyl 5-phosphate + NADPH + H(+). Its pathway is amino-acid biosynthesis; L-proline biosynthesis; L-glutamate 5-semialdehyde from L-glutamate: step 2/2. Its function is as follows. Catalyzes the NADPH-dependent reduction of L-glutamate 5-phosphate into L-glutamate 5-semialdehyde and phosphate. The product spontaneously undergoes cyclization to form 1-pyrroline-5-carboxylate. This is Gamma-glutamyl phosphate reductase from Bacillus velezensis (strain DSM 23117 / BGSC 10A6 / LMG 26770 / FZB42) (Bacillus amyloliquefaciens subsp. plantarum).